We begin with the raw amino-acid sequence, 606 residues long: Mitogen-activated protein kinase kinase kinase 7 (606 aa).

The interval 1-300 (MSTASAASSS…FPGADEPLQY (300 aa)) is interaction with MAPK8IP1. Positions 36–291 (IEVEEVVGRG…KIMTHLMRYF (256 aa)) constitute a Protein kinase domain. ATP-binding positions include 42–50 (VGRGAFGVV) and K63. A Glycyl lysine isopeptide (Lys-Gly) (interchain with G-Cter in ubiquitin) cross-link involves residue K72. D156 functions as the Proton acceptor in the catalytic mechanism. Residue K158 forms a Glycyl lysine isopeptide (Lys-Gly) (interchain with G-Cter in ubiquitin) linkage. T184 and T187 each carry phosphothreonine; by autocatalysis. The residue at position 192 (S192) is a Phosphoserine; by autocatalysis. Residue K209 forms a Glycyl lysine isopeptide (Lys-Gly) (interchain with G-Cter in ubiquitin) linkage. Disordered stretches follow at residues 301–338 (PCQYSDEGQSNSATSTGSFMDIASTNTSNKSDTNMEQV) and 354–391 (KNQAKQQSDSGRLSLGASRGSSVESLPPTSEGKRMSAD). Positions 306–338 (DEGQSNSATSTGSFMDIASTNTSNKSDTNMEQV) are enriched in polar residues. Residues 361–375 (SDSGRLSLGASRGSS) are compositionally biased toward low complexity. S367, S389, and S439 each carry phosphoserine. Residues 443-452 (LTVTGTEPGQ) show a composition bias toward polar residues. The tract at residues 443-492 (LTVTGTEPGQVSSRSSSPSVRMITTSGPTSEKPARSLPWTPDDSTDTNGS) is disordered. Residues 453–463 (VSSRSSSPSVR) show a composition bias toward low complexity. The residue at position 455 (S455) is a Phosphoserine.

This sequence belongs to the protein kinase superfamily. STE Ser/Thr protein kinase family. MAP kinase kinase kinase subfamily. As to quaternary structure, can form homodimer. Binds both upstream activators and downstream substrates in multimolecular complexes. Interacts with TAB1/MAP3K7IP1, TAB2/MAP3K7IP2 and TAB3/MAP3K7IP3. Identified in the TRIKA2 complex composed of MAP3K7/TAK1, TAB1/MAP3K7IP1 and TAB2/MAP3K7IP2. Interacts with PPM1L and PPM1B/PP2CB. Interaction with PP2A and PPP6C leads to its repressed activity. Interacts with TRAF6 and TAB1/MAP3K7IP1; during IL-1 signaling. Interacts with TAOK1 and TAOK2; interaction with TAOK2 interferes with MAP3K7 interaction with IKKA, thus preventing NF-kappa-B activation. Interacts with DYNC2I2 (via WD domains). Interacts with CYLD and RBCK1. Interacts with TGFBR1; induces MAP3K7/TAK1 activation by TRAF6. Interacts with MAPK8IP1 and SMAD6. Interacts with isoform 1 of VRK2. Interacts with DAB2; the interaction is induced by TGF-beta stimulation and may mediate TGF-beta stimulated JNK activation. Interacts with TRIM5. Part of a complex containing ITCH, NDFIP1 and MAP3K7. Interacts with PLEKHM1 (via N- and C-terminus). Found in a complex with SH3RF1, RAC2, MAP2K7/MKK7, MAPK8IP1/JIP1, MAPK8/JNK1 and MAPK9/JNK2. Interacts with SASH1. Interacts with RIPK1. Mg(2+) is required as a cofactor. In terms of processing, association with TAB1/MAP3K7IP1 promotes autophosphorylation at Ser-192 and subsequent activation. Association with TAB2/MAP3K7IP2, itself associated with free unanchored Lys-63 polyubiquitin chain, promotes autophosphorylation and subsequent activation of MAP3K7. Dephosphorylation at Ser-192 by PPM1B/PP2CB and at Thr-187 by PP2A and PPP6C leads to inactivation. Deubiquitinated by USP19; leading to negative regulation of TNF-alpha- and IL-1beta-triggered NF-kappa-B activation. Post-translationally, 'Lys-48'-linked polyubiquitination at Lys-72 is induced by TNFalpha, and leads to proteasomal degradation. Undergoes 'Lys-48'-linked polyubiquitination catalyzed by ITCH. 'Lys-63'-linked polyubiquitination at Lys-158 by TRIM8 does not lead to proteasomal degradation but contributes to autophosphorylation and activation. Deubiquitinated by CYLD, a protease that selectively cleaves 'Lys-63'-linked ubiquitin chains.

It localises to the cytoplasm. The protein resides in the cell membrane. It carries out the reaction L-seryl-[protein] + ATP = O-phospho-L-seryl-[protein] + ADP + H(+). The catalysed reaction is L-threonyl-[protein] + ATP = O-phospho-L-threonyl-[protein] + ADP + H(+). Its activity is regulated as follows. Activated by pro-inflammatory cytokines and in response to physical and chemical stresses, including osmotic stress, oxidative stress, arsenic and ultraviolet light irradiation. Activated by 'Lys-63'-linked polyubiquitination and by autophosphorylation. Association with TAB1/MAP3K7IP1 and TAB2/MAP3K7IP2 promotes activation through autophosphorylation, whereas PPM1B/PP2CB, PP2A and PPP6C dephosphorylation leads to inactivation. Ceramides are also able to activate MAP3K7/TAK1. In terms of biological role, serine/threonine kinase which acts as an essential component of the MAP kinase signal transduction pathway. Plays an important role in the cascades of cellular responses evoked by changes in the environment. Mediates signal transduction of TRAF6, various cytokines including interleukin-1 (IL-1), transforming growth factor-beta (TGFB), TGFB-related factors like BMP2 and BMP4, toll-like receptors (TLR), tumor necrosis factor receptor CD40 and B-cell receptor (BCR). Once activated, acts as an upstream activator of the MKK/JNK signal transduction cascade and the p38 MAPK signal transduction cascade through the phosphorylation and activation of several MAP kinase kinases like MAP2K1/MEK1, MAP2K3/MKK3, MAP2K6/MKK6 and MAP2K7/MKK7. These MAP2Ks in turn activate p38 MAPKs and c-jun N-terminal kinases (JNKs); both p38 MAPK and JNK pathways control the transcription factors activator protein-1 (AP-1). Independently of MAP2Ks and p38 MAPKs, acts as a key activator of NF-kappa-B by promoting activation of the I-kappa-B-kinase (IKK) core complex. Mechanistically, recruited to polyubiquitin chains of RIPK2 and IKBKG/NEMO via TAB2/MAP3K7IP2 and TAB3/MAP3K7IP3, and catalyzes phosphorylation and activation of IKBKB/IKKB component of the IKK complex, leading to NF-kappa-B activation. In osmotic stress signaling, plays a major role in the activation of MAPK8/JNK1, but not that of NF-kappa-B. Promotes TRIM5 capsid-specific restriction activity. Phosphorylates RIPK1 at 'Ser-321' which positively regulates RIPK1 interaction with RIPK3 to promote necroptosis but negatively regulates RIPK1 kinase activity and its interaction with FADD to mediate apoptosis. Phosphorylates STING1 in response to cGAMP-activation, promoting association between STEEP1 and STING1 and STING1 translocation to COPII vesicles. The sequence is that of Mitogen-activated protein kinase kinase kinase 7 (Map3k7) from Rattus norvegicus (Rat).